We begin with the raw amino-acid sequence, 199 residues long: Venom allergen 5 (199 aa).

2 disulfide bridges follow: cysteine 21/cysteine 87 and cysteine 167/cysteine 184. Positions 38–186 constitute an SCP domain; sequence LKVHNDERQK…FYKCYLACNY (149 aa). The disordered stretch occupies residues 47–67; it reads KVKAGQETRGNPGPQPAASNM.

This sequence belongs to the CRISP family. Venom allergen 5-like subfamily. Expressed by the venom gland.

The protein resides in the secreted. The polypeptide is Venom allergen 5 (Brachyponera chinensis (Asian needle ant)).